The sequence spans 238 residues: tRNA (guanine-N(7)-)-methyltransferase (238 aa).

Residues Glu-70, Asp-95, Asp-122, and Asp-145 each coordinate S-adenosyl-L-methionine. Asp-145 is an active-site residue. Substrate is bound by residues Lys-149, Asp-181, and 216–219 (TKFE).

This sequence belongs to the class I-like SAM-binding methyltransferase superfamily. TrmB family.

The catalysed reaction is guanosine(46) in tRNA + S-adenosyl-L-methionine = N(7)-methylguanosine(46) in tRNA + S-adenosyl-L-homocysteine. Its pathway is tRNA modification; N(7)-methylguanine-tRNA biosynthesis. Its function is as follows. Catalyzes the formation of N(7)-methylguanine at position 46 (m7G46) in tRNA. The protein is tRNA (guanine-N(7)-)-methyltransferase of Neisseria meningitidis serogroup C / serotype 2a (strain ATCC 700532 / DSM 15464 / FAM18).